The chain runs to 356 residues: MLDRLKSIEERYEKLNELLSDPEVVNDPKKLREYSKEQSDIQETVDVYRQYRDASEQLADAKAMLEEKLDAEMRDMVKEEISELQKETETLSERLKVLLIPKDPNDDKNVIMEIRGAAGGEEAALFAGNLYRMYSRYAELQGWKTEVMEANVTGTGGYKEIIFMITGSGAYSKLKYENGAHRVQRVPETESGGRIHTSTATVACLPEAEEVEVDIHEKDIRVDTFASSGPGGQSVNTTMSAVRLTHLPTGVVVSCQDEKSQIKNKEKAMKVLRARIYDKFQQEAQAEYDQTRKSAVGSGDRSERIRTYNFPQNRVTDHRIGLTIQKLDQILEGKLDEVVEALIVEDQASKLQQSEG.

An N5-methylglutamine modification is found at Gln233.

This sequence belongs to the prokaryotic/mitochondrial release factor family. Post-translationally, methylated by PrmC. Methylation increases the termination efficiency of RF1.

It is found in the cytoplasm. Its function is as follows. Peptide chain release factor 1 directs the termination of translation in response to the peptide chain termination codons UAG and UAA. The protein is Peptide chain release factor 1 (prfA) of Bacillus subtilis (strain 168).